A 471-amino-acid chain; its full sequence is 3-isopropylmalate dehydratase large subunit (471 aa).

[4Fe-4S] cluster is bound by residues C351, C412, and C415.

It belongs to the aconitase/IPM isomerase family. LeuC type 1 subfamily. As to quaternary structure, heterodimer of LeuC and LeuD. [4Fe-4S] cluster is required as a cofactor.

The catalysed reaction is (2R,3S)-3-isopropylmalate = (2S)-2-isopropylmalate. The protein operates within amino-acid biosynthesis; L-leucine biosynthesis; L-leucine from 3-methyl-2-oxobutanoate: step 2/4. Its function is as follows. Catalyzes the isomerization between 2-isopropylmalate and 3-isopropylmalate, via the formation of 2-isopropylmaleate. This Hahella chejuensis (strain KCTC 2396) protein is 3-isopropylmalate dehydratase large subunit.